The following is a 249-amino-acid chain: Triosephosphate isomerase (249 aa).

The substrate site is built by asparagine 12 and lysine 14. Lysine 14 carries the N6-acetyllysine modification. Tyrosine 68 carries the post-translational modification 3'-nitrotyrosine. The residue at position 80 (serine 80) is a Phosphoserine. The active-site Electrophile is histidine 96. A Phosphoserine modification is found at serine 106. A Glycyl lysine isopeptide (Lys-Gly) (interchain with G-Cter in SUMO1) cross-link involves residue lysine 142. Lysine 149 carries the post-translational modification N6-succinyllysine. Lysine 156 carries the post-translational modification N6-acetyllysine; alternate. Residue lysine 156 is modified to N6-succinyllysine; alternate. Serine 159 carries the phosphoserine modification. The Proton acceptor role is filled by glutamate 166. At threonine 173 the chain carries Phosphothreonine. At lysine 194 the chain carries N6-acetyllysine; alternate. Lysine 194 is modified (N6-succinyllysine; alternate). Lysine 194 is subject to N6-methyllysine; alternate. Position 198 is a phosphoserine (serine 198). Position 209 is a 3'-nitrotyrosine (tyrosine 209). Serine 212 is modified (phosphoserine). Position 214 is a phosphothreonine (threonine 214). Position 223 is a phosphoserine (serine 223). Position 238 is an N6-acetyllysine (lysine 238).

This sequence belongs to the triosephosphate isomerase family. As to quaternary structure, homodimer.

Its subcellular location is the cytoplasm. The catalysed reaction is dihydroxyacetone phosphate = methylglyoxal + phosphate. The enzyme catalyses D-glyceraldehyde 3-phosphate = dihydroxyacetone phosphate. It functions in the pathway carbohydrate degradation; glycolysis; D-glyceraldehyde 3-phosphate from glycerone phosphate: step 1/1. It participates in carbohydrate biosynthesis; gluconeogenesis. Its function is as follows. Triosephosphate isomerase is an extremely efficient metabolic enzyme that catalyzes the interconversion between dihydroxyacetone phosphate (DHAP) and D-glyceraldehyde-3-phosphate (G3P) in glycolysis and gluconeogenesis. In terms of biological role, it is also responsible for the non-negligible production of methylglyoxal a reactive cytotoxic side-product that modifies and can alter proteins, DNA and lipids. This is Triosephosphate isomerase (TPI1) from Pongo abelii (Sumatran orangutan).